Consider the following 259-residue polypeptide: Acyl-[acyl-carrier-protein]--UDP-N-acetylglucosamine O-acyltransferase (259 aa).

Belongs to the transferase hexapeptide repeat family. LpxA subfamily. As to quaternary structure, homotrimer.

It localises to the cytoplasm. It catalyses the reaction a (3R)-hydroxyacyl-[ACP] + UDP-N-acetyl-alpha-D-glucosamine = a UDP-3-O-[(3R)-3-hydroxyacyl]-N-acetyl-alpha-D-glucosamine + holo-[ACP]. Its pathway is glycolipid biosynthesis; lipid IV(A) biosynthesis; lipid IV(A) from (3R)-3-hydroxytetradecanoyl-[acyl-carrier-protein] and UDP-N-acetyl-alpha-D-glucosamine: step 1/6. Involved in the biosynthesis of lipid A, a phosphorylated glycolipid that anchors the lipopolysaccharide to the outer membrane of the cell. The protein is Acyl-[acyl-carrier-protein]--UDP-N-acetylglucosamine O-acyltransferase of Akkermansia muciniphila (strain ATCC BAA-835 / DSM 22959 / JCM 33894 / BCRC 81048 / CCUG 64013 / CIP 107961 / Muc).